The chain runs to 282 residues: Bifunctional protein FolD (282 aa).

NADP(+) contacts are provided by residues Asn-165–Ser-167, Ser-190, and Ile-231.

Belongs to the tetrahydrofolate dehydrogenase/cyclohydrolase family. Homodimer.

It catalyses the reaction (6R)-5,10-methylene-5,6,7,8-tetrahydrofolate + NADP(+) = (6R)-5,10-methenyltetrahydrofolate + NADPH. It carries out the reaction (6R)-5,10-methenyltetrahydrofolate + H2O = (6R)-10-formyltetrahydrofolate + H(+). The protein operates within one-carbon metabolism; tetrahydrofolate interconversion. Catalyzes the oxidation of 5,10-methylenetetrahydrofolate to 5,10-methenyltetrahydrofolate and then the hydrolysis of 5,10-methenyltetrahydrofolate to 10-formyltetrahydrofolate. The polypeptide is Bifunctional protein FolD (Clostridium botulinum (strain 657 / Type Ba4)).